The sequence spans 199 residues: Peroxiredoxin-2 (199 aa).

The 159-residue stretch at 7-165 (AHVGKPAPEF…ALRLVQAFQY (159 aa)) folds into the Thioredoxin domain. Cysteine 52 (cysteine sulfenic acid (-SOH) intermediate) is an active-site residue. Serine 113 is subject to Phosphoserine. A Phosphothreonine modification is found at threonine 183. Lysine 197 is subject to N6-acetyllysine.

This sequence belongs to the peroxiredoxin family. AhpC/Prx1 subfamily. In terms of assembly, homodimer; disulfide-linked, upon oxidation. 5 homodimers assemble to form a ring-like decamer. Interacts with TIPIN. Post-translationally, the enzyme can be inactivated by further oxidation of the cysteine sulfenic acid (C(P)-SOH) to sulphinic acid (C(P)-SO2H) instead of its condensation to a disulfide bond. It can be reactivated by forming a transient disulfide bond with sulfiredoxin SRXN1, which reduces the cysteine sulfinic acid in an ATP- and Mg-dependent manner. Acetylation increases resistance to transition to high molecular-mass complexes. Deacetylated by HDAC6 which decreases reducing activity.

It is found in the cytoplasm. It catalyses the reaction a hydroperoxide + [thioredoxin]-dithiol = an alcohol + [thioredoxin]-disulfide + H2O. Functionally, thiol-specific peroxidase that catalyzes the reduction of hydrogen peroxide and organic hydroperoxides to water and alcohols, respectively. Plays a role in cell protection against oxidative stress by detoxifying peroxides and as sensor of hydrogen peroxide-mediated signaling events. Might participate in the signaling cascades of growth factors and tumor necrosis factor-alpha by regulating the intracellular concentrations of H(2)O(2). This is Peroxiredoxin-2 (PRDX2) from Bos taurus (Bovine).